A 186-amino-acid chain; its full sequence is Transposons Tn1721 resolvase (186 aa).

One can recognise a Resolvase/invertase-type recombinase catalytic domain in the interval 4–137; it reads HRIGYVRVSS…EGIALAKQRG (134 aa). Residue Ser12 is the O-(5'-phospho-DNA)-serine intermediate of the active site. A DNA-binding region (H-T-H motif) is located at residues 164–183; it reads KAQLAREFNISRETLYQYLR.

This sequence belongs to the site-specific recombinase resolvase family.

Functionally, resolvase catalyzes the resolution (a site-specific recombination) of the cointegrated replicon to yield the final transposition products. This is Transposons Tn1721 resolvase (tnpR) from Escherichia coli.